Reading from the N-terminus, the 658-residue chain is UvrABC system protein B (658 aa).

Positions 25–178 constitute a Helicase ATP-binding domain; it reads KSLKNNNHYQ…KNFLLKLVEM (154 aa). 38–45 is an ATP binding site; that stretch reads GVTGSGKT. Residues 91-114 carry the Beta-hairpin motif; that stretch reads HFDYYQPESYIPRRDLFIEKDSSI. The Helicase C-terminal domain occupies 433–607; the sequence is QVQDLFDEIK…ELKLRDDEIR (175 aa). In terms of domain architecture, UVR spans 623 to 658; sequence EKIIKELDKKMRECAKNLDFEEAMRLRDEIAKLRTL.

It belongs to the UvrB family. As to quaternary structure, forms a heterotetramer with UvrA during the search for lesions. Interacts with UvrC in an incision complex.

Its subcellular location is the cytoplasm. Functionally, the UvrABC repair system catalyzes the recognition and processing of DNA lesions. A damage recognition complex composed of 2 UvrA and 2 UvrB subunits scans DNA for abnormalities. Upon binding of the UvrA(2)B(2) complex to a putative damaged site, the DNA wraps around one UvrB monomer. DNA wrap is dependent on ATP binding by UvrB and probably causes local melting of the DNA helix, facilitating insertion of UvrB beta-hairpin between the DNA strands. Then UvrB probes one DNA strand for the presence of a lesion. If a lesion is found the UvrA subunits dissociate and the UvrB-DNA preincision complex is formed. This complex is subsequently bound by UvrC and the second UvrB is released. If no lesion is found, the DNA wraps around the other UvrB subunit that will check the other stand for damage. The polypeptide is UvrABC system protein B (Helicobacter pylori (strain HPAG1)).